We begin with the raw amino-acid sequence, 341 residues long: Ketol-acid reductoisomerase (NADP(+)) (341 aa).

The KARI N-terminal Rossmann domain maps to 2–182 (TDIVYDKDAD…GGLRAGGIRT (181 aa)). NADP(+)-binding positions include 25–28 (YGSQ), lysine 48, serine 51, serine 53, and 83–86 (DQHQ). Histidine 108 is an active-site residue. NADP(+) is bound at residue glycine 134. A KARI C-terminal knotted domain is found at 183-328 (TFTEETETDL…RELRKLFAWN (146 aa)). Mg(2+) is bound by residues aspartate 191, glutamate 195, glutamate 227, and glutamate 231. Serine 252 provides a ligand contact to substrate.

Belongs to the ketol-acid reductoisomerase family. Mg(2+) serves as cofactor.

It catalyses the reaction (2R)-2,3-dihydroxy-3-methylbutanoate + NADP(+) = (2S)-2-acetolactate + NADPH + H(+). The catalysed reaction is (2R,3R)-2,3-dihydroxy-3-methylpentanoate + NADP(+) = (S)-2-ethyl-2-hydroxy-3-oxobutanoate + NADPH + H(+). Its pathway is amino-acid biosynthesis; L-isoleucine biosynthesis; L-isoleucine from 2-oxobutanoate: step 2/4. It participates in amino-acid biosynthesis; L-valine biosynthesis; L-valine from pyruvate: step 2/4. Involved in the biosynthesis of branched-chain amino acids (BCAA). Catalyzes an alkyl-migration followed by a ketol-acid reduction of (S)-2-acetolactate (S2AL) to yield (R)-2,3-dihydroxy-isovalerate. In the isomerase reaction, S2AL is rearranged via a Mg-dependent methyl migration to produce 3-hydroxy-3-methyl-2-ketobutyrate (HMKB). In the reductase reaction, this 2-ketoacid undergoes a metal-dependent reduction by NADPH to yield (R)-2,3-dihydroxy-isovalerate. This chain is Ketol-acid reductoisomerase (NADP(+)), found in Clavibacter sepedonicus (Clavibacter michiganensis subsp. sepedonicus).